The primary structure comprises 217 residues: Large ribosomal subunit protein bL25 (217 aa).

The disordered stretch occupies residues 187-217; it reads STPSGLEVEEETGEEESAEPEVIEKGKKEEE. Over residues 193-207 the composition is skewed to acidic residues; the sequence is EVEEETGEEESAEPE. Residues 208-217 are compositionally biased toward basic and acidic residues; it reads VIEKGKKEEE.

The protein belongs to the bacterial ribosomal protein bL25 family. CTC subfamily. Part of the 50S ribosomal subunit; part of the 5S rRNA/L5/L18/L25 subcomplex. Contacts the 5S rRNA. Binds to the 5S rRNA independently of L5 and L18.

This is one of the proteins that binds to the 5S RNA in the ribosome where it forms part of the central protuberance. The protein is Large ribosomal subunit protein bL25 of Thermosipho africanus (strain TCF52B).